Here is a 192-residue protein sequence, read N- to C-terminus: Rho-related protein racC (192 aa).

Position 13–20 (13–20 (GDGAVGKT)) interacts with GTP. Residues 35-43 (YIPTVFDNY) carry the Effector region motif. Residues 60–64 (DTAGQ) and 118–121 (TKLD) each bind GTP. A Cysteine methyl ester modification is found at Cys189. Cys189 carries S-geranylgeranyl cysteine lipidation. Residues 190 to 192 (IVM) constitute a propeptide, removed in mature form.

The protein belongs to the small GTPase superfamily. Rho family. As to quaternary structure, interacts with pakB.

The protein localises to the cell membrane. The chain is Rho-related protein racC (racC) from Dictyostelium discoideum (Social amoeba).